A 573-amino-acid polypeptide reads, in one-letter code: Putative ATP-dependent RNA helicase R563 (573 aa).

Positions 57–233 constitute a Helicase ATP-binding domain; it reads INPKTPYKGL…ALTMNLLVRN (177 aa). 70–77 is a binding site for ATP; it reads HRIGAGKT. The DEAH box signature appears at 179 to 182; sequence DEVH. The 178-residue stretch at 374 to 551 folds into the Helicase C-terminal domain; sequence KILRKIKRCN…AFEKALKEAA (178 aa).

It belongs to the DEAD box helicase family. DEAH subfamily.

The protein resides in the virion. It carries out the reaction ATP + H2O = ADP + phosphate + H(+). This chain is Putative ATP-dependent RNA helicase R563, found in Acanthamoeba polyphaga mimivirus (APMV).